We begin with the raw amino-acid sequence, 472 residues long: Alanine--anticapsin ligase (472 aa).

Glu-109 is a binding site for Mg(2+). Residues Lys-138 and Lys-178 each coordinate ATP. Residues 142–355 (RDAFNKAGVK…MAQLLLDVLC (214 aa)) form the ATP-grasp domain. Position 182 (Leu-182) interacts with Mg(2+). ATP-binding positions include 184-185 (SS), 226-229 (EEFL), and Gln-268. Substrate-binding positions include Glu-273 and 309-311 (HTE). The Mg(2+) site is built by Glu-311 and Glu-324. Position 328-331 (328-331 (RFAG)) interacts with substrate.

As to quaternary structure, monomer or homodimer. Requires Mg(2+) as cofactor.

It carries out the reaction L-anticapsin + L-alanine + ATP = bacilysin + ADP + phosphate + H(+). It functions in the pathway antibiotic biosynthesis; bacilysin biosynthesis. Functionally, part of the bacABCDEFG operon responsible for the biosynthesis of bacilysin, an irreversible inactivator of the glutaminase domain of glucosamine synthetase. Catalyzes the formation of alpha-dipeptides from various L-amino acids in the presence of ATP. In vivo catalyzes the ligation of L-alanine and L-anticapsin (epoxycyclohexanonyl-Ala) to produce the final bacilysin antibiotic (L-Ala-L-4S-cyclohexenonyl-Ala dipeptide). The substrate specificity is restricted to small amino acids such as L-Ala, for the N-terminal end of the dipeptide, whereas a wide range of hydrophobic amino acids such as L-Phe, L-Tyr and L-Met are recognized for the C-terminal end. The protein is Alanine--anticapsin ligase of Bacillus subtilis (strain 168).